Consider the following 585-residue polypeptide: MVYLEWAKADRNIQYRVINAIIKERIYPEQTFISQKGSLIEIQYHMHVLTIEVVRKSALERYEFTGDITYLNKGETSLIITLEGLLDVLNHDFDIPISERLREELIHSRDSLVETYKQMSHRQTLISQSFKFSRLPQDINFFSWLQHVKDSDKTDDLTYSESLVPEGHPTHPLTKTKLPLTMEEVRAYAPEFEKEIPLQIMMIEKDHVVCTAMDGNDQFIIDEIIPEYYNQIRVFLKSLGLKSEDYRAILVHPWQYDHTIGKYFEAWIAKKILIPTPFTILSKATLSFRTMSLIDKPYHVKLPVDAQATSAVRTVSTVTTVDGPKLSYALQNMLNQYPGFKVAMEPFGEYANVDKDRARQLACIIRQKPEIDGKGATVVSASLVNKNPIDQKVIVDSYLEWLNQGITKESITTFIERYAQALIPPLIAFIQNYGIALEAHMQNTVVNLGPHFDIQFLVRDLGGSRIDLETLQHRVSDIKITNDSLIADSIDAVIAKFQHAVIQNQMAELIHHFNQYDCVEETELFNIVQQVVAHAINPTLPHANELKDILFGPTITVKALLNMRMENKVKQYLNIELDNPIKKEV.

Belongs to the IucA/IucC family.

It carries out the reaction N(5)-[(S)-citryl]-D-ornithine + citrate + ATP = staphyloferrin A + AMP + diphosphate + H(+). The protein operates within siderophore biosynthesis. Involved in the biosynthesis of the siderophore staphyloferrin A. Catalyzes the ATP-dependent condensation of a citryl-D-ornithine intermediate, produced by SfnaD, and citrate to form staphyloferrin A. This is Staphyloferrin A synthase from Staphylococcus aureus (strain NCTC 8325 / PS 47).